A 510-amino-acid polypeptide reads, in one-letter code: Coatomer subunit delta (510 aa).

One can recognise an MHD domain in the interval 270-510; sequence MESVHMKIEE…TFLVDKYEIL (241 aa).

This sequence belongs to the adaptor complexes medium subunit family. Delta-COP subfamily. In terms of assembly, oligomeric complex that consists of at least the alpha, beta, beta', gamma, delta, epsilon and zeta subunits.

It is found in the cytoplasm. The protein resides in the golgi apparatus membrane. Its subcellular location is the cytoplasmic vesicle. The protein localises to the COPI-coated vesicle membrane. Its function is as follows. The coatomer is a cytosolic protein complex that binds to dilysine motifs and reversibly associates with Golgi non-clathrin-coated vesicles, which further mediate biosynthetic protein transport from the ER, via the Golgi up to the trans Golgi network. Coatomer complex is required for budding from Golgi membranes, and is essential for the retrograde Golgi-to-ER transport of dilysine-tagged proteins. In mammals, the coatomer can only be recruited by membranes associated to ADP-ribosylation factors (ARFs), which are small GTP-binding proteins; the complex also influences the Golgi structural integrity, as well as the processing, activity, and endocytic recycling of LDL receptors. This Gallus gallus (Chicken) protein is Coatomer subunit delta (ARCN1).